The following is a 117-amino-acid chain: RutC family protein HD_0322 (117 aa).

It belongs to the RutC family.

This Haemophilus ducreyi (strain 35000HP / ATCC 700724) protein is RutC family protein HD_0322.